Here is a 212-residue protein sequence, read N- to C-terminus: MADEKNKRWQELADVKRELAQRDWFYGTSGNLSIKVSDDPITFLVTASGKDKRKETDEDFVLVNAAGNPVDPDVPLRPSAETQLHTYVYERTNAGCCLHVHTIDNNVISELYGDKGEIRFKGNEIIKALGYWEEDAEVSLPIIENPAHIPHLAAQFAKHLTEESESGAVLIRNHGITVWGKTASEAKRVLEAYEFLFSYYLKLTLYQKQLVT.

Zn(2+) is bound by residues H99 and H101.

Belongs to the aldolase class II family. MtnB subfamily. In terms of assembly, homotetramer. The cofactor is Zn(2+).

It catalyses the reaction 5-(methylsulfanyl)-D-ribulose 1-phosphate = 5-methylsulfanyl-2,3-dioxopentyl phosphate + H2O. Its pathway is amino-acid biosynthesis; L-methionine biosynthesis via salvage pathway; L-methionine from S-methyl-5-thio-alpha-D-ribose 1-phosphate: step 2/6. Catalyzes the dehydration of methylthioribulose-1-phosphate (MTRu-1-P) into 2,3-diketo-5-methylthiopentyl-1-phosphate (DK-MTP-1-P). In Bacillus pumilus (strain SAFR-032), this protein is Methylthioribulose-1-phosphate dehydratase.